The following is a 529-amino-acid chain: Putative inorganic phosphate cotransporter (529 aa).

A run of 8 helical transmembrane segments spans residues 37 to 57 (FATR…AYVM), 110 to 130 (YILS…GILA), 148 to 168 (VFAF…LCAV), 202 to 222 (AVYA…GLLA), 232 to 252 (SIFY…LIFV), 338 to 358 (LPYL…DWMI), 429 to 449 (FLMS…PIAA), and 466 to 486 (IVFF…NIFG). Positions 495-529 (NPEDDEQKPALQTTVTTSPARLSNGSTAPAAISSS) are disordered. Over residues 504–529 (ALQTTVTTSPARLSNGSTAPAAISSS) the composition is skewed to polar residues.

It belongs to the major facilitator superfamily. Sodium/anion cotransporter family.

The protein resides in the membrane. May be an inorganic phosphate cotransporter. The protein is Putative inorganic phosphate cotransporter (Picot) of Drosophila melanogaster (Fruit fly).